Consider the following 455-residue polypeptide: UDP-N-acetylmuramate--L-alanine ligase (455 aa).

109-115 (GTHGKTT) is an ATP binding site.

This sequence belongs to the MurCDEF family.

The protein localises to the cytoplasm. It carries out the reaction UDP-N-acetyl-alpha-D-muramate + L-alanine + ATP = UDP-N-acetyl-alpha-D-muramoyl-L-alanine + ADP + phosphate + H(+). It participates in cell wall biogenesis; peptidoglycan biosynthesis. Cell wall formation. This is UDP-N-acetylmuramate--L-alanine ligase from Caldicellulosiruptor bescii (strain ATCC BAA-1888 / DSM 6725 / KCTC 15123 / Z-1320) (Anaerocellum thermophilum).